A 271-amino-acid chain; its full sequence is Hachiman protein HamA (271 aa).

Functionally, component of antiviral defense system Hachiman, composed of HamA and HamB. Expression of Hachiman in B.subtilis (strain BEST7003) confers resistance to phages phi105, phi29, phi3T, rho14, SBSphiJ, SpBeta and SPR. In Bacillus cereus, this protein is Hachiman protein HamA.